The sequence spans 330 residues: Beta-ketoacyl-[acyl-carrier-protein] synthase III (330 aa).

Catalysis depends on residues C111 and H249. An ACP-binding region spans residues 250–254 (QANTR). N279 is a catalytic residue.

It belongs to the thiolase-like superfamily. FabH family. Homodimer.

It localises to the cytoplasm. It catalyses the reaction malonyl-[ACP] + acetyl-CoA + H(+) = 3-oxobutanoyl-[ACP] + CO2 + CoA. It participates in lipid metabolism; fatty acid biosynthesis. In terms of biological role, catalyzes the condensation reaction of fatty acid synthesis by the addition to an acyl acceptor of two carbons from malonyl-ACP. Catalyzes the first condensation reaction which initiates fatty acid synthesis and may therefore play a role in governing the total rate of fatty acid production. Possesses both acetoacetyl-ACP synthase and acetyl transacylase activities. Its substrate specificity determines the biosynthesis of branched-chain and/or straight-chain of fatty acids. The protein is Beta-ketoacyl-[acyl-carrier-protein] synthase III of Pseudomonas aeruginosa (strain LESB58).